A 505-amino-acid chain; its full sequence is Maturase K (505 aa).

Belongs to the intron maturase 2 family. MatK subfamily.

It is found in the plastid. Its subcellular location is the chloroplast. In terms of biological role, usually encoded in the trnK tRNA gene intron. Probably assists in splicing its own and other chloroplast group II introns. This chain is Maturase K, found in Nuphar advena (Common spatterdock).